A 199-amino-acid chain; its full sequence is V-type ATP synthase subunit E (199 aa).

This sequence belongs to the V-ATPase E subunit family.

Its function is as follows. Produces ATP from ADP in the presence of a proton gradient across the membrane. This Borreliella burgdorferi (strain ATCC 35210 / DSM 4680 / CIP 102532 / B31) (Borrelia burgdorferi) protein is V-type ATP synthase subunit E (atpE).